Here is a 111-residue protein sequence, read N- to C-terminus: uncharacterized protein (111 aa).

2 helical membrane passes run 7-27 (ILNIILALAVPIGLLFISMMI) and 53-73 (AFAMFIPLLIIALTLLVTFLH).

It is found in the cell membrane. This is an uncharacterized protein from Bacillus anthracis.